The sequence spans 275 residues: Diaminopimelate epimerase (275 aa).

Substrate is bound by residues N20 and N63. Residue C72 is the Proton donor of the active site. Substrate contacts are provided by residues 73–74 (GN), N179, and 197–198 (ER). The Proton acceptor role is filled by C207. Residue 208 to 209 (GT) coordinates substrate.

This sequence belongs to the diaminopimelate epimerase family. Homodimer.

Its subcellular location is the cytoplasm. It catalyses the reaction (2S,6S)-2,6-diaminopimelate = meso-2,6-diaminopimelate. It functions in the pathway amino-acid biosynthesis; L-lysine biosynthesis via DAP pathway; DL-2,6-diaminopimelate from LL-2,6-diaminopimelate: step 1/1. Its function is as follows. Catalyzes the stereoinversion of LL-2,6-diaminopimelate (L,L-DAP) to meso-diaminopimelate (meso-DAP), a precursor of L-lysine and an essential component of the bacterial peptidoglycan. In Chlamydia trachomatis serovar A (strain ATCC VR-571B / DSM 19440 / HAR-13), this protein is Diaminopimelate epimerase.